A 30-amino-acid polypeptide reads, in one-letter code: Platelet factor 4 (30 aa).

This sequence belongs to the intercrine alpha (chemokine CxC) family. As to quaternary structure, homotetramer. Interacts with TNFAIP6 (via Link domain). Interacts with CCR1. Interacts with CXCR3. Post-translationally, binds non-covalently to a proteoglycan molecule.

Its subcellular location is the secreted. Functionally, chemokine released during platelet aggregation that plays a role in different biological processes including hematopoiesis, cell proliferation, differentiation, and activation. Acts via different functional receptors including CCR1, CXCR3A or CXCR3B. Upon interaction with CXCR3A receptor, induces activated T-lymphocytes migration mediated via downstream Ras/extracellular signal-regulated kinase (ERK) signaling. Neutralizes the anticoagulant effect of heparin by binding more strongly to heparin than to the chondroitin-4-sulfate chains of the carrier molecule. Plays a role in the inhibition of hematopoiesis and in the maintenance of hematopoietic stem cell (HSC) quiescence. Chemotactic for neutrophils and monocytes via CCR1. Inhibits endothelial cell proliferation. In cooperation with toll-like receptor 8/TLR8, induces chromatin remodeling and activates inflammatory gene expression via the TBK1-IRF5 axis. In addition, induces myofibroblast differentiation and collagen synthesis in different precursor cells, including endothelial cells, by stimulating endothelial-to-mesenchymal transition. In Oryctolagus cuniculus (Rabbit), this protein is Platelet factor 4 (PF4).